Reading from the N-terminus, the 2904-residue chain is Protein eyes shut homolog (2904 aa).

The first 23 residues, 1–23 (MRNPKLAIIVFLLSCVIYGPVYS), serve as a signal peptide directing secretion. N-linked (GlcNAc...) asparagine glycans are attached at residues Asn-41 and Asn-135. EGF-like domains are found at residues 174–216 (KPQL…RYCE), 217–259 (NVDG…VNCS), 263–298 (GNQNCSKWCKEGACLKVSSTSYRCECFTGYTGTYCE), and 300–336 (KRLFCDSNPCRNDGRCEETANGYVCTCPGGFTGLNCE). 6 disulfides stabilise this stretch: Cys-178–Cys-193, Cys-187–Cys-204, Cys-206–Cys-215, Cys-221–Cys-232, Cys-226–Cys-247, and Cys-249–Cys-258. 2 N-linked (GlcNAc...) asparagine glycosylation sites follow: Asn-257 and Asn-266. Cystine bridges form between Cys-267/Cys-276, Cys-271/Cys-286, Cys-288/Cys-297, Cys-304/Cys-315, Cys-309/Cys-324, and Cys-326/Cys-335. N-linked (GlcNAc...) asparagine glycosylation is present at Asn-362. 3 EGF-like domains span residues 375-411 (QAEVCGTLPCLNGGICVVPNGQYHCRCRQGFSGKNCE), 413-451 (IIDFCKLLNINCLNEGLCLNRVGGYNCLCAPGWTGEFCQ), and 453-496 (LENA…PYCE). 12 disulfide bridges follow: Cys-379/Cys-390, Cys-384/Cys-399, Cys-401/Cys-410, Cys-417/Cys-430, Cys-424/Cys-439, Cys-441/Cys-450, Cys-457/Cys-470, Cys-464/Cys-484, Cys-486/Cys-495, Cys-502/Cys-513, Cys-507/Cys-522, and Cys-524/Cys-533. Positions 498-534 (EVNECDSSPCQHQGTCTDFVGYYKCTCPSGYTGIDCE) constitute an EGF-like 8; calcium-binding domain. A glycan (N-linked (GlcNAc...) asparagine) is linked at Asn-544. In terms of domain architecture, EGF-like 9 spans 565 to 603 (HTPCPHYLQPCANGGHCVLHNITSYSCVCAPGWTGATCL). 78 cysteine pairs are disulfide-bonded: Cys-568–Cys-581, Cys-575–Cys-591, Cys-593–Cys-602, Cys-609–Cys-620, Cys-614–Cys-629, Cys-631–Cys-640, Cys-645–Cys-656, Cys-650–Cys-665, Cys-667–Cys-676, Cys-683–Cys-694, Cys-688–Cys-703, Cys-705–Cys-714, Cys-721–Cys-732, Cys-726–Cys-741, Cys-743–Cys-752, Cys-759–Cys-772, Cys-764–Cys-781, Cys-783–Cys-792, Cys-799–Cys-810, Cys-804–Cys-819, Cys-821–Cys-830, Cys-837–Cys-848, Cys-842–Cys-857, Cys-859–Cys-868, Cys-875–Cys-886, Cys-880–Cys-895, Cys-897–Cys-906, Cys-913–Cys-924, Cys-918–Cys-933, Cys-935–Cys-944, Cys-951–Cys-962, Cys-956–Cys-971, Cys-973–Cys-982, Cys-987–Cys-999, Cys-993–Cys-1014, Cys-1016–Cys-1025, Cys-1032–Cys-1042, Cys-1037–Cys-1051, Cys-1053–Cys-1062, Cys-1069–Cys-1080, Cys-1074–Cys-1089, Cys-1091–Cys-1100, Cys-1107–Cys-1118, Cys-1112–Cys-1127, Cys-1129–Cys-1138, Cys-1145–Cys-1156, Cys-1150–Cys-1167, Cys-1169–Cys-1178, Cys-1185–Cys-1198, Cys-1192–Cys-1208, Cys-1210–Cys-1219, Cys-1226–Cys-1237, Cys-1231–Cys-1246, Cys-1248–Cys-1257, Cys-1264–Cys-1275, Cys-1269–Cys-1284, Cys-1286–Cys-1295, Cys-1302–Cys-1313, Cys-1307–Cys-1322, Cys-1324–Cys-1333, Cys-1340–Cys-1351, Cys-1345–Cys-1360, Cys-1362–Cys-1371, Cys-1378–Cys-1388, Cys-1383–Cys-1397, Cys-1399–Cys-1408, Cys-1415–Cys-1426, Cys-1420–Cys-1435, Cys-1437–Cys-1446, Cys-1453–Cys-1469, Cys-1463–Cys-1479, Cys-1481–Cys-1490, Cys-1497–Cys-1508, Cys-1502–Cys-1517, Cys-1519–Cys-1528, Cys-1535–Cys-1545, Cys-1540–Cys-1556, and Cys-1558–Cys-1567. N-linked (GlcNAc...) asparagine glycosylation occurs at Asn-585. The 37-residue stretch at 605–641 (NINECVQHRCQNRATCVDEVGGYSCLCGHGYTGVHCE) folds into the EGF-like 10; calcium-binding domain. An EGF-like 11 domain is found at 642–677 (LDFCSGHQCSEHAVCVDQQHNYTCRCMLGYEGTLCE). Asn-662 carries N-linked (GlcNAc...) asparagine glycosylation. In terms of domain architecture, EGF-like 12; calcium-binding spans 679–715 (ETDECKSAPCTNNATCIDLVAGYQCLCAPGFKGRTCS). Residue Asn-691 is glycosylated (N-linked (GlcNAc...) asparagine). EGF-like domains follow at residues 717 to 753 (SMNECWSRPCNNGGSCIDLVNDYICNCPLGFTGHDCS), 755 to 793 (PATGCTSNPCNTKGTSMCEEQQDGFKCVCHHGYTGLFCE), and 795 to 831 (SINHCVEGLCHHGSECVDLTKGFMCECLPGLRGRLCE). Residues 833–869 (NIDDCLDKPCGALSICKDGINAYDCFCAPGFVGNNCE) form the EGF-like 16; calcium-binding domain. Positions 871–907 (EVNECLSQPCQNGASCSDELNSFSCLCLAGTTGSLCE) constitute an EGF-like 17; calcium-binding domain. The region spanning 909 to 945 (NIDECQSSPCMNNGTCLDLSDGFKCICPSGFSGPECS) is the EGF-like 18; calcium-binding domain. N-linked (GlcNAc...) asparagine glycosylation is present at Asn-921. The EGF-like 19; calcium-binding domain occupies 947–983 (DINECVSYPCKNGGSCIDQPGNYYCRCLAPFKGLNCE). In terms of domain architecture, EGF-like 20 spans 984 to 1026 (LLPCEAVNPCDNGAECVEEADLVLFPLGFQCRCRKGFTGPRCE). The 36-residue stretch at 1028–1063 (NIDECSSNPCLNGFCYDAVDGFYCLCNPGYAGVRCE) folds into the EGF-like 21; calcium-binding domain. Residues 1065 to 1101 (HINDCASNMCENNSTCVDLHLSYNCLCLPGWEGEYCQ) enclose the EGF-like 22 domain. Asn-1077 carries N-linked (GlcNAc...) asparagine glycosylation. The EGF-like 23; calcium-binding domain maps to 1103–1139 (ETNECLSNPCKNNATCTDLLNAYRCVCPQGWTGLDCD). A glycan (N-linked (GlcNAc...) asparagine) is linked at Asn-1115. 2 EGF-like domains span residues 1141-1179 (DVKECSSSPCLNGAHCVESDTPGEFSCTCPPFFTGPLCE) and 1181-1220 (PYDPCELQRNPCLHNSTCRAQSDGTALCVCPVGFEGTRCE). N-linked (GlcNAc...) asparagine glycosylation occurs at Asn-1195. Positions 1222–1258 (DSDDCVSRPCQNRGICVDGVNSYSCFCEPGFSGLHCE) constitute an EGF-like 26; calcium-binding domain. Positions 1260-1296 (DINECASNPCQNQAVCQDLVNGFQCSCVPGYFGPHCN) constitute an EGF-like 27; calcium-binding domain. Residues 1298–1334 (DVNECDSSPCLHESVCINKPGGFACVCSAGFSGKWCE) enclose the EGF-like 28; calcium-binding domain. Positions 1336-1372 (NVDECKSNPCRNNGSCIDGLNGYQCVCSRGFMGDHCE) constitute an EGF-like 29; calcium-binding domain. The N-linked (GlcNAc...) asparagine glycan is linked to Asn-1348. Residues 1374-1409 (NTDECSSGPCVHGSCLDEIDAFSCQCEVGWTGHRCQ) enclose the EGF-like 30; calcium-binding domain. The region spanning 1411-1447 (NINECEAHPCLNGGSCVDLLDKYACICADGFTGKNCD) is the EGF-like 31; calcium-binding domain. Residues 1449–1491 (DQNVCLQTSLNFSLCFNGGTCVDGPGVNFTCSCRPGFMGDFCE) form the EGF-like 32 domain. 2 N-linked (GlcNAc...) asparagine glycosylation sites follow: Asn-1459 and Asn-1476. In terms of domain architecture, EGF-like 33; calcium-binding spans 1493–1529 (EMNECCSEPCFNGAICQDLINGYQCHCRPGWTGLHCE). Positions 1531-1568 (DINECLLQPCNQGMCIQNEPGHGYTCFCRPGFVGENCE) constitute an EGF-like 34 domain. N-linked (GlcNAc...) asparagine glycosylation is found at Asn-1591, Asn-1755, and Asn-1788. The region spanning 1640 to 1818 (ASFGGYSGNS…AIARNNVDNC (179 aa)) is the Laminin G-like 1 domain. Cystine bridges form between Cys-1792/Cys-1818, Cys-1860/Cys-1871, Cys-1865/Cys-1885, and Cys-1887/Cys-1896. An EGF-like 35 domain is found at 1856–1897 (PAPVCPQGICLNGGTCRPVSLPSGASSFFCDCPLHFTGRLCE). In terms of domain architecture, Laminin G-like 2 spans 1902–2102 (VFSPRFDGNS…NIQNCDAAVC (201 aa)). 2 N-linked (GlcNAc...) asparagine glycosylation sites follow: Asn-2025 and Asn-2064. Disulfide bonds link Cys-2071/Cys-2102, Cys-2102/Cys-2113, Cys-2107/Cys-2122, Cys-2124/Cys-2133, Cys-2138/Cys-2149, Cys-2143/Cys-2159, and Cys-2161/Cys-2170. 2 EGF-like domains span residues 2098 to 2134 (DAAVCQHQPCRNGGTCISDAESWFCACPSLYSGKLCQ) and 2135 to 2171 (FTACERNPCARGATCVPQTQLEAACLCPYGRQGLLCD). Asn-2175 and Asn-2216 each carry an N-linked (GlcNAc...) asparagine glycan. A Laminin G-like 3 domain is found at 2182–2372 (SGLDEFGYSS…PLSGRNVGQC (191 aa)). 7 cysteine pairs are disulfide-bonded: Cys-2339–Cys-2372, Cys-2377–Cys-2388, Cys-2382–Cys-2397, Cys-2399–Cys-2408, Cys-2415–Cys-2431, Cys-2425–Cys-2440, and Cys-2442–Cys-2451. 2 consecutive EGF-like domains span residues 2373 to 2409 (GVNPCSLVFCHNGGTCVDSGSSVYCQCVFGWKGALCS) and 2411 to 2452 (KVSF…LHCQ). The region spanning 2459–2642 (DPFFSGNQSS…NVGDWDGTAC (184 aa)) is the Laminin G-like 4 domain. 3 N-linked (GlcNAc...) asparagine glycosylation sites follow: Asn-2465, Asn-2528, and Asn-2570. EGF-like domains are found at residues 2638–2675 (DGTACGYKVCKNGGHCHPSGDFSFTCICPSLWTGSRCQ) and 2676–2714 (QSIQCLNNLCQHNSVCIHNSTSASYSCMCSLGWTGTHCD). Intrachain disulfides connect Cys-2642–Cys-2653, Cys-2647–Cys-2663, Cys-2665–Cys-2674, Cys-2680–Cys-2691, Cys-2685–Cys-2702, and Cys-2704–Cys-2713. Residue Asn-2694 is glycosylated (N-linked (GlcNAc...) asparagine). The 176-residue stretch at 2719 to 2894 (LKTIRFIGNS…TKQLQFLQTC (176 aa)) folds into the Laminin G-like 5 domain. 2 N-linked (GlcNAc...) asparagine glycosylation sites follow: Asn-2750 and Asn-2816.

Belongs to the EYS family. As to expression, expressed in retina where it localizes between the retinal pigment epithelium and the outer nuclear layer (at protein level).

It localises to the cell projection. It is found in the cilium. The protein resides in the cytoplasm. The protein localises to the cytoskeleton. Its subcellular location is the cilium axoneme. It localises to the secreted. It is found in the extracellular space. The protein resides in the extracellular matrix. The protein localises to the interphotoreceptor matrix. Functionally, required to maintain the integrity of photoreceptor cells. Specifically required for normal morphology of the photoreceptor ciliary pocket, and might thus facilitate protein trafficking between the photoreceptor inner and outer segments via the transition zone. This chain is Protein eyes shut homolog, found in Danio rerio (Zebrafish).